The following is a 1374-amino-acid chain: Mitogen-activated protein kinase kinase kinase 5 (1374 aa).

Positions 68-87 (PAATSSSSATRGRGSSVGGG) are disordered. Residues 69-81 (AATSSSSATRGRG) are compositionally biased toward low complexity. 2 positions are modified to asymmetric dimethylarginine; by PRMT1: R78 and R80. At S83 the chain carries Phosphoserine; by PIM1 and PKB/AKT1. Residues 649-1374 (MVNTITEEKG…AIIDFRNKQT (726 aa)) form an interaction with PPIA/CYPA region. Residues 680 to 938 (NGDRVVLGKG…ANDLLVDEFL (259 aa)) form the Protein kinase domain. ATP is bound by residues 686 to 694 (LGKGTYGIV) and K709. Y718 carries the post-translational modification Phosphotyrosine. D803 serves as the catalytic Proton acceptor. Position 813 is a phosphothreonine; by autocatalysis (T813). The residue at position 838 (T838) is a Phosphothreonine; by autocatalysis, MELK and MAP3K6. A Phosphothreonine; by autocatalysis modification is found at T842. S958 carries the post-translational modification Phosphoserine. S966 carries the phosphoserine; by autocatalysis modification. Phosphoserine is present on residues S1029 and S1033. Residues 1182-1209 (SESDTADQEDLDVEDDHEEQPSNQTVRR) form a disordered region. Residues 1185–1199 (DTADQEDLDVEDDHE) show a composition bias toward acidic residues. A coiled-coil region spans residues 1245 to 1285 (LGRMKIETNRLLEELVRKEKELQALLHRAIEEKDQEIKHLK).

The protein belongs to the protein kinase superfamily. STE Ser/Thr protein kinase family. MAP kinase kinase kinase subfamily. As to quaternary structure, homodimer when inactive. Binds both upstream activators and downstream substrates in multimolecular complexes. Part of a cytoplasmic complex made of HIPK1, DAB2IP and MAP3K5 in response to TNF. This complex formation promotes MAP3K5-JNK activation and subsequent apoptosis. Interacts with SOCS1 which recognizes phosphorylation of Tyr-718 and induces MAP3K5/ASK1 degradation in endothelial cells. Interacts with the 14-3-3 family proteins such as YWHAB, YWHAE, YWHAQ, YWHAH, YWHAZ and SFN. Interacts with ARRB2, BIRC2, DAB2IP, IGF1R, MAP3K6/ASK2, PGAM5, PIM1, PPP5C, SOCS1, STUB1, TRAF2, TRAF6 and TXN. Interacts with ERN1 in a TRAF2-dependent manner. Interacts with calcineurin subunit PPP3R1. Interacts with PPM1L. Interacts (via N-terminus) with RAF1 and this interaction inhibits the proapoptotic function of MAP3K5. Interacts with DAB2IP (via N-terminus C2 domain); the interaction occurs in a TNF-alpha-dependent manner. Interacts with DUSP13A; may positively regulate apoptosis. Interacts with DAXX. Interacts with RC3H2. Interacts with PPIA/CYPA. Interacts with PRMT1; the interaction results in MAP3K5 methylation by PRMT1 which inhibits MAP3K5 activation. Interacts with TRAF2; the interaction is inhibited by PRMT1. Interacts with TRIM48. In terms of assembly, (Microbial infection) Interacts with HIV-1 Nef; this interaction inhibits MAP3K5 signaling. Mg(2+) is required as a cofactor. Phosphorylated at Thr-838 through autophosphorylation and by MAP3K6/ASK2 which leads to activation. Thr-838 is dephosphorylated by PPP5C. Ser-83 and Ser-1033 are inactivating phosphorylation sites, the former of which is phosphorylated by AKT1. Phosphorylated at Ser-966 which induces association of MAP3K5/ASK1 with the 14-3-3 family proteins and suppresses MAP3K5/ASK1 activity. Calcineurin (CN) dephosphorylates this site. Also dephosphorylated and activated by PGAM5. Phosphorylation at Ser-966 in response to oxidative stress is negatively regulated by PPIA/CYPA. In terms of processing, ubiquitinated. Tumor necrosis factor (TNF) induces TNFR2-dependent ubiquitination, leading to proteasomal degradation. Ubiquitinated by RC3H2 in a TRIM48-dependent manner. Post-translationally, methylation at Arg-78 and Arg-80 by PRMT1 promotes association of MAP3K5 with thioredoxin and negatively regulates MAP3K5 association with TRAF2, inhibiting MAP3K5 activation. Methylation is blocked by ubiquitination of PRMT1 by TRIM48. As to expression, abundantly expressed in heart and pancreas.

The protein resides in the cytoplasm. The protein localises to the endoplasmic reticulum. It catalyses the reaction L-seryl-[protein] + ATP = O-phospho-L-seryl-[protein] + ADP + H(+). The enzyme catalyses L-threonyl-[protein] + ATP = O-phospho-L-threonyl-[protein] + ADP + H(+). Its activity is regulated as follows. Activated by various stressors, including oxidative stress, endoplasmic reticulum stress, and calcium overload, as well as by receptor-mediated inflammatory signals, such as the tumor necrosis factor (TNF) and lipopolysaccharide (LPS). Homophilic association of MAP3K5/ASK1 through the C-terminal coiled-coil domains and the heteromeric complex formation of MAP3K5/ASK1 with the reduced form of thioredoxin (TXN), constitutes an inactive form of the kinase. Upon ROS-induced dissociation of TXN from MAP3K5/ASK1, TRAF2 and TRAF6 are reciprocally recruited to MAP3K5/ASK1 and form the active MAP3K5/ASK1 signalosome, in which TRAF2 and TRAF6 appear to facilitate the active configuration of MAP3K5/ASK1. MAP3K5/ASK1 activity is also regulated through several phosphorylation and dephosphorylation events. Thr-838 is an activating phosphorylation site that is autophosphorylated and phosphorylated by MAP3K6/ASK2 and dephosphorylated by PPP5C. Ser-83 and Ser-1033 are inactivating phosphorylation sites, the former of which is phosphorylated by AKT1. Phosphorylation of Ser-966 induces association of MAP3K5/ASK1 with the 14-3-3 family proteins, which suppresses MAP3K5/ASK1 activity. Calcium/calmodulin-activated protein phosphatase calcineurin (PPP3CA) has been shown to directly dephosphorylate this site. SOCS1 binds to ASK1 by recognizing phosphorylation of Tyr-718 and induces MAP3K5/ASK1 degradation in endothelial cells. Also dephosphorylated and activated by PGAM5. Contains an N-terminal autoinhibitory domain. Once activated targeted for proteasomal degradation by RC3H2-mediated ubiquitination. In terms of biological role, serine/threonine kinase which acts as an essential component of the MAP kinase signal transduction pathway. Plays an important role in the cascades of cellular responses evoked by changes in the environment. Mediates signaling for determination of cell fate such as differentiation and survival. Plays a crucial role in the apoptosis signal transduction pathway through mitochondria-dependent caspase activation. MAP3K5/ASK1 is required for the innate immune response, which is essential for host defense against a wide range of pathogens. Mediates signal transduction of various stressors like oxidative stress as well as by receptor-mediated inflammatory signals, such as the tumor necrosis factor (TNF) or lipopolysaccharide (LPS). Once activated, acts as an upstream activator of the MKK/JNK signal transduction cascade and the p38 MAPK signal transduction cascade through the phosphorylation and activation of several MAP kinase kinases like MAP2K4/SEK1, MAP2K3/MKK3, MAP2K6/MKK6 and MAP2K7/MKK7. These MAP2Ks in turn activate p38 MAPKs and c-jun N-terminal kinases (JNKs). Both p38 MAPK and JNKs control the transcription factors activator protein-1 (AP-1). This is Mitogen-activated protein kinase kinase kinase 5 (MAP3K5) from Homo sapiens (Human).